The primary structure comprises 299 residues: MLDGKQDNGNVDSVDIKQRTNGGGDEGDALGSNSSSQPNRVARMPVDRNAPYYNMNHKHRGMAIIFNHEHFDIHSLKSRTGTNVDSDNLSKVLKTLGFKVTVFPNLKSEEINKFIQQTAEMDHSDADCLLVAVLTHGELGMLYAKDTHYKPDNLWYYFTADKCPTLAGKPKLFFIQACQGDRLDGGITLSRTETDGSPSTSYRIPVHADFLIAFSTVPGYFSWRNTTRGSWFMQALCEELRYAGTERDILTLLTFVCQKVALDFESNAPDSAMMHQQKQVPCITSMLTRLLVFGKKQSH.

A propeptide spanning residues methionine 1–aspartate 28 is cleaved from the precursor. The segment at methionine 1–proline 45 is disordered. Residues histidine 136 and cysteine 178 contribute to the active site. Positions glycine 185–aspartate 195 are excised as a propeptide.

Belongs to the peptidase C14A family. Heterotetramer that consists of two anti-parallel arranged heterodimers, each one formed by a 19/18 kDa (p19/18) and a 12 kDa (p12) subunit. The two subunits are derived from the precursor sequence by an autocatalytic mechanism.

Functionally, involved in the activation cascade of caspases responsible for apoptosis execution. Inhibited by the baculovirus anti-apoptotic protein p35. Cleaves p35 and nuclear immunophilin FKBP46. The protein is Caspase-1 of Spodoptera frugiperda (Fall armyworm).